The sequence spans 308 residues: 1D-myo-inositol 2-acetamido-2-deoxy-alpha-D-glucopyranoside deacetylase (308 aa).

3 residues coordinate Zn(2+): His-37, Asp-40, and His-171.

It belongs to the MshB deacetylase family. The cofactor is Zn(2+).

It catalyses the reaction 1D-myo-inositol 2-acetamido-2-deoxy-alpha-D-glucopyranoside + H2O = 1D-myo-inositol 2-amino-2-deoxy-alpha-D-glucopyranoside + acetate. Its function is as follows. Catalyzes the deacetylation of 1D-myo-inositol 2-acetamido-2-deoxy-alpha-D-glucopyranoside (GlcNAc-Ins) in the mycothiol biosynthesis pathway. This chain is 1D-myo-inositol 2-acetamido-2-deoxy-alpha-D-glucopyranoside deacetylase, found in Mycobacterium sp. (strain KMS).